A 223-amino-acid chain; its full sequence is Phage shock protein A homolog (223 aa).

A coiled-coil region spans residues 29–185 (IDQALRDMRS…AGMEDRNKAM (157 aa)).

The protein belongs to the PspA/Vipp/IM30 family.

The chain is Phage shock protein A homolog from Deinococcus radiodurans (strain ATCC 13939 / DSM 20539 / JCM 16871 / CCUG 27074 / LMG 4051 / NBRC 15346 / NCIMB 9279 / VKM B-1422 / R1).